Consider the following 541-residue polypeptide: Membrane protein insertase YidC (541 aa).

Transmembrane regions (helical) follow at residues 6–26 (NILL…WQAD), 325–345 (LVVD…LLMF), 349–369 (FVGN…GLLF), 420–440 (GGCL…WVLL), 457–477 (LSVQ…MFVM), and 500–520 (VIFT…WLVG).

Belongs to the OXA1/ALB3/YidC family. Type 1 subfamily. Interacts with the Sec translocase complex via SecD. Specifically interacts with transmembrane segments of nascent integral membrane proteins during membrane integration.

It is found in the cell inner membrane. Its function is as follows. Required for the insertion and/or proper folding and/or complex formation of integral membrane proteins into the membrane. Involved in integration of membrane proteins that insert both dependently and independently of the Sec translocase complex, as well as at least some lipoproteins. Aids folding of multispanning membrane proteins. The chain is Membrane protein insertase YidC from Shewanella baltica (strain OS195).